The sequence spans 890 residues: V-type proton ATPase subunit a, Golgi isoform (890 aa).

Met-1 is subject to N-acetylmethionine. The Cytoplasmic portion of the chain corresponds to 1–450; it reads MNQEEAIFRS…DAYGIATYKE (450 aa). Positions 113-154 form a coiled coil; the sequence is LENVNDMVKEITDCESRARQLDESLDSLRSKLNDLLEQRQVI. Phosphoserine is present on residues Ser-223 and Ser-228. A coiled-coil region spans residues 297–347; sequence LKKVKRVIDSLNGKIVSLNTRSSELVDTLNRQIDDLQRILDTTEQTLHTEL. Residues 451 to 469 traverse the membrane as a helical segment; it reads INAGLATVVTFPFMFAIMF. Topologically, residues 470 to 471 are vacuolar; the sequence is GD. Residues 472 to 488 traverse the membrane as a helical segment; sequence MGHGFILFLMALFLVLN. Topologically, residues 489–502 are cytoplasmic; that stretch reads ERKFGAMHRDEIFD. A helical membrane pass occupies residues 503–532; sequence MAFTGRYVLLLMGAFSVYTGLLYNDIFSKS. The Vacuolar segment spans residues 533 to 580; sequence MTIFKSGWQWPSTFRKGESIEAKKTGVYPFGLDFAWHGTDNGLLFSNS. Residues 581-600 form a helical membrane-spanning segment; sequence YKMKLSILMGYAHMTYSFMF. At 601-618 the chain is on the cytoplasmic side; the sequence is SYINYRAKNSKVDIIGNF. A helical transmembrane segment spans residues 619 to 639; sequence IPGLVFMQSIFGYLSWAIVYK. The Vacuolar segment spans residues 640-682; that stretch reads WSKDWIKDDKPAPGLLNMLINMFLAPGTIDDQLYSGQAKLQVV. Residues 683–702 form a helical membrane-spanning segment; it reads LLLAALVCVPWLLLYKPLTL. The Cytoplasmic segment spans residues 703-779; it reads RRLNKNGGGG…DVMIHQVIHT (77 aa). Residues 780–804 form a helical membrane-spanning segment; sequence IEFCLNCISHTASYLRLWALSLAHA. Topologically, residues 805 to 828 are vacuolar; that stretch reads QLSSVLWDMTISNAFSSKNSGSPL. A helical transmembrane segment spans residues 829–867; sequence AVMKVVFLFAMWFVLTVCILVFMEGTSAMLHALRLHWVE. The Cytoplasmic segment spans residues 868–890; it reads AMSKFFEGEGYAYEPFSFRAIIE.

This sequence belongs to the V-ATPase 116 kDa subunit family. As to quaternary structure, V-ATPase is a heteromultimeric enzyme composed of a peripheral catalytic V1 complex (components A to H) attached to an integral membrane V0 proton pore complex (components: a, c, c', c'', d, e, f and VOA1). In terms of processing, glycosylated.

The protein resides in the endosome membrane. Its subcellular location is the golgi apparatus membrane. Its function is as follows. Subunit of the V0 complex of vacuolar(H+)-ATPase (V-ATPase), a multisubunit enzyme composed of a peripheral complex (V1) that hydrolyzes ATP and a membrane integral complex (V0) that translocates protons. V-ATPase is responsible for acidifying and maintaining the pH of intracellular compartments. Is present only in Golgi- and endosome-residing V-ATPase complexes; enzymes containing this subunit have a 4-fold lower ratio of proton transport to ATP hydrolysis than complexes containing the vacuolar isoform and do not dissociate V1 and V0 in response to glucose depletion. This Saccharomyces cerevisiae (strain ATCC 204508 / S288c) (Baker's yeast) protein is V-type proton ATPase subunit a, Golgi isoform (STV1).